Here is an 88-residue protein sequence, read N- to C-terminus: uncharacterized protein (88 aa).

The next 2 helical transmembrane spans lie at 8 to 28 (IFLS…SIFF) and 45 to 65 (ELLR…VINL).

It is found in the membrane. This is an uncharacterized protein from Saccharomyces cerevisiae (strain ATCC 204508 / S288c) (Baker's yeast).